Here is a 418-residue protein sequence, read N- to C-terminus: Glutamyl-tRNA reductase (418 aa).

Residues 49–52 (TCNR), Ser-109, 114–116 (EPQ), and Gln-120 contribute to the substrate site. Catalysis depends on Cys-50, which acts as the Nucleophile. Residue 189 to 194 (GAGETI) coordinates NADP(+).

The protein belongs to the glutamyl-tRNA reductase family. As to quaternary structure, homodimer.

It catalyses the reaction (S)-4-amino-5-oxopentanoate + tRNA(Glu) + NADP(+) = L-glutamyl-tRNA(Glu) + NADPH + H(+). It functions in the pathway porphyrin-containing compound metabolism; protoporphyrin-IX biosynthesis; 5-aminolevulinate from L-glutamyl-tRNA(Glu): step 1/2. Its function is as follows. Catalyzes the NADPH-dependent reduction of glutamyl-tRNA(Glu) to glutamate 1-semialdehyde (GSA). The protein is Glutamyl-tRNA reductase of Shigella dysenteriae serotype 1 (strain Sd197).